Consider the following 178-residue polypeptide: Oligoribonuclease (178 aa).

In terms of domain architecture, Exonuclease spans 7-168; the sequence is LIWIDLEMTG…DDIRESIAEL (162 aa). Tyr128 is a catalytic residue.

The protein belongs to the oligoribonuclease family.

Its subcellular location is the cytoplasm. Its function is as follows. 3'-to-5' exoribonuclease specific for small oligoribonucleotides. This chain is Oligoribonuclease, found in Pseudomonas syringae pv. syringae (strain B728a).